The chain runs to 392 residues: Phosphoglycerate kinase (392 aa).

Substrate is bound by residues 21-23 (DLN), R36, 59-62 (HLGR), R114, and R147. ATP-binding positions include K198, E320, and 346-349 (GGDT).

Belongs to the phosphoglycerate kinase family. In terms of assembly, monomer.

Its subcellular location is the cytoplasm. The enzyme catalyses (2R)-3-phosphoglycerate + ATP = (2R)-3-phospho-glyceroyl phosphate + ADP. It participates in carbohydrate degradation; glycolysis; pyruvate from D-glyceraldehyde 3-phosphate: step 2/5. This chain is Phosphoglycerate kinase, found in Nitrosomonas europaea (strain ATCC 19718 / CIP 103999 / KCTC 2705 / NBRC 14298).